The sequence spans 186 residues: CRS2-like protein, chloroplastic (186 aa).

Residues 1 to 49 (MAMTAASVFGSGGCLELLTSSKAMRGKLWTRLAPFISKRHASTSQTSLS) constitute a chloroplast transit peptide. Residue tyrosine 73 coordinates tRNA. Histidine 78 serves as the catalytic Proton acceptor. TRNA-binding residues include tyrosine 123, asparagine 125, and asparagine 171.

The protein belongs to the PTH family.

It is found in the plastid. It localises to the chloroplast. This chain is CRS2-like protein, chloroplastic, found in Oryza sativa subsp. japonica (Rice).